The following is a 137-amino-acid chain: Small ribosomal subunit protein uS12 (137 aa).

The tract at residues 1–24 (MPTINQLVRKGRRSQSSKSKAPAL) is disordered. 3-methylthioaspartic acid is present on Asp102.

This sequence belongs to the universal ribosomal protein uS12 family. As to quaternary structure, part of the 30S ribosomal subunit. Contacts proteins S8 and S17. May interact with IF1 in the 30S initiation complex.

Its function is as follows. With S4 and S5 plays an important role in translational accuracy. Functionally, interacts with and stabilizes bases of the 16S rRNA that are involved in tRNA selection in the A site and with the mRNA backbone. Located at the interface of the 30S and 50S subunits, it traverses the body of the 30S subunit contacting proteins on the other side and probably holding the rRNA structure together. The combined cluster of proteins S8, S12 and S17 appears to hold together the shoulder and platform of the 30S subunit. The chain is Small ribosomal subunit protein uS12 from Pediococcus pentosaceus (strain ATCC 25745 / CCUG 21536 / LMG 10740 / 183-1w).